We begin with the raw amino-acid sequence, 1082 residues long: Protein SPT23 (1082 aa).

Disordered regions lie at residues 315-346 (NASN…PQSD), 376-417 (NNNN…FSDI), and 457-476 (ASAR…FMST). A compositionally biased stretch (low complexity) spans 316–328 (ASNTTTPTSTSNA). A compositionally biased stretch (polar residues) spans 329-346 (QVSPMTNDTRSFSSPQSD). Low complexity-rich tracts occupy residues 376 to 391 (NNNN…KTNT) and 399 to 416 (HFPS…SFSD). S468 bears the Phosphoserine mark. An IPT/TIG domain is found at 508 to 585 (PSIQRVIPAQ…DPSETSMRNN (78 aa)). ANK repeat units follow at residues 709–738 (RGRT…HLND) and 742–771 (FGFT…NIMK).

Its function is as follows. Dosage-dependent suppressor of Ty-induced promoter mutations. May exert its suppression effect through protein-protein interactions since does not present any of the motifs generally found in transcriptional activators or DNA binding proteins. The sequence is that of Protein SPT23 (SPT23) from Saccharomyces cerevisiae (strain ATCC 204508 / S288c) (Baker's yeast).